Here is a 279-residue protein sequence, read N- to C-terminus: Putative phosphoenolpyruvate synthase regulatory protein (279 aa).

Position 159-166 (159-166 (GVSRSGKT)) interacts with ADP.

Belongs to the pyruvate, phosphate/water dikinase regulatory protein family. PSRP subfamily.

The enzyme catalyses [pyruvate, water dikinase] + ADP = [pyruvate, water dikinase]-phosphate + AMP + H(+). It carries out the reaction [pyruvate, water dikinase]-phosphate + phosphate + H(+) = [pyruvate, water dikinase] + diphosphate. Its function is as follows. Bifunctional serine/threonine kinase and phosphorylase involved in the regulation of the phosphoenolpyruvate synthase (PEPS) by catalyzing its phosphorylation/dephosphorylation. The protein is Putative phosphoenolpyruvate synthase regulatory protein of Ralstonia nicotianae (strain ATCC BAA-1114 / GMI1000) (Ralstonia solanacearum).